Reading from the N-terminus, the 1413-residue chain is DNA-directed RNA polymerase subunit beta' (1413 aa).

Zn(2+) contacts are provided by C70, C72, C85, and C88. Mg(2+) contacts are provided by D460, D462, and D464. The Zn(2+) site is built by C819, C893, C900, and C903.

This sequence belongs to the RNA polymerase beta' chain family. As to quaternary structure, the RNAP catalytic core consists of 2 alpha, 1 beta, 1 beta' and 1 omega subunit. When a sigma factor is associated with the core the holoenzyme is formed, which can initiate transcription. The cofactor is Mg(2+). It depends on Zn(2+) as a cofactor.

It carries out the reaction RNA(n) + a ribonucleoside 5'-triphosphate = RNA(n+1) + diphosphate. Functionally, DNA-dependent RNA polymerase catalyzes the transcription of DNA into RNA using the four ribonucleoside triphosphates as substrates. The protein is DNA-directed RNA polymerase subunit beta' of Burkholderia vietnamiensis (strain G4 / LMG 22486) (Burkholderia cepacia (strain R1808)).